We begin with the raw amino-acid sequence, 465 residues long: Lysosomal dipeptide transporter MFSD1 (465 aa).

Residues 1–23 (MEEEDEEARALLAGGPDEADRGA) form a disordered region. The short motif at 11–12 (LL) is the Dileucine internalization motif element. A run of 12 helical transmembrane segments spans residues 39-59 (LAHRLLVLLLMCFLGFGSYFC), 83-103 (LLYAWYSWPNVVLCFFGGFLI), 113-133 (TIIFSCFVCIGQVVFALGGIF), 135-155 (AFWLMEFGRFVFGIGGESLAV), 170-191 (LNLVFGLQLSMARIGSTVNMNL), 213-233 (ITLMIGGITCILSLICALALA), 266-286 (LWLIFIICVCYYVAVFPFIGL), 303-323 (SAINSVVYVISAPMSPVFGLL), 331-351 (IIWVLCAVAATLVSHMMLAFT), 361-381 (LLGLSYSLLACALWPMVAFVV), 392-412 (FMQSIQNLGLAIISIIAGMIL), and 418-438 (LFLEVFFIACVSLSLLSVVLL).

The protein belongs to the major facilitator superfamily. In terms of assembly, homodimer. Interacts with lysosomal protein GLMP (via lumenal domain); the interaction starts while both proteins are still in the endoplasmic reticulum and is required for stabilization of MFSD1 in lysosomes but has no direct effect on its targeting to lysosomes or transporter activity.

The protein localises to the lysosome membrane. It catalyses the reaction L-alpha-aminoacyl-L-arginine(out) = L-alpha-aminoacyl-L-arginine(in). The enzyme catalyses L-arginyl-L-alpha-amino acid(out) = L-arginyl-L-alpha-amino acid(in). The catalysed reaction is L-arginyl-glycine(out) = L-arginyl-glycine(in). It carries out the reaction L-alpha-aminoacyl-L-lysine(out) = L-alpha-aminoacyl-L-lysine(in). It catalyses the reaction L-aspartyl-L-lysine(out) = L-aspartyl-L-lysine(in). The enzyme catalyses L-alanyl-L-lysine(out) = L-alanyl-L-lysine(in). The catalysed reaction is L-lysyl-L-alpha-amino acid(out) = L-lysyl-L-alpha-amino acid(in). It carries out the reaction L-lysyl-L-alanine(out) = L-lysyl-L-alanine(in). It catalyses the reaction L-lysyl-L-lysine(out) = L-lysyl-L-lysine(in). The enzyme catalyses L-lysyl-glycine(out) = L-lysyl-glycine(in). The catalysed reaction is L-alpha-aminoacyl-L-histidine(out) = L-alpha-aminoacyl-L-histidine(in). It carries out the reaction L-histidyl-L-alpha-amino acid(out) = L-histidyl-L-alpha-amino acid(in). It catalyses the reaction L-histidyl-glycine(out) = L-histidyl-glycine(in). Functionally, lysosomal dipeptide uniporter that selectively exports lysine, arginine or histidine-containing dipeptides with a net positive charge from the lysosome lumen into the cytosol. Could play a role in a specific type of protein O-glycosylation indirectly regulating macrophages migration and tissue invasion. Also essential for liver homeostasis. This is Lysosomal dipeptide transporter MFSD1 from Homo sapiens (Human).